The sequence spans 228 residues: MVTNLLTLALPKGKLGQDALQLLQAAGLPVEGVATEARQLTFTFPAPGIRYLICRPTDVPTYVEYGAADLGIVGKDTLAEAGADVFELVDLGFGYCRFVVAAPRERWEEAGRSLENLLAGSRRVATKFPRVAASFFQERGLPVEIIKLHGNIELAPRAGLADLIVDIVSTGRTLKENDLVEVAPIFSSTARLIANRVSYRINYRRLTSVVEALKRAAGQGGEKIATTN.

Belongs to the ATP phosphoribosyltransferase family. Short subfamily. In terms of assembly, heteromultimer composed of HisG and HisZ subunits.

The protein resides in the cytoplasm. It catalyses the reaction 1-(5-phospho-beta-D-ribosyl)-ATP + diphosphate = 5-phospho-alpha-D-ribose 1-diphosphate + ATP. The protein operates within amino-acid biosynthesis; L-histidine biosynthesis; L-histidine from 5-phospho-alpha-D-ribose 1-diphosphate: step 1/9. In terms of biological role, catalyzes the condensation of ATP and 5-phosphoribose 1-diphosphate to form N'-(5'-phosphoribosyl)-ATP (PR-ATP). Has a crucial role in the pathway because the rate of histidine biosynthesis seems to be controlled primarily by regulation of HisG enzymatic activity. The polypeptide is ATP phosphoribosyltransferase (Moorella thermoacetica (strain ATCC 39073 / JCM 9320)).